We begin with the raw amino-acid sequence, 622 residues long: Chaperone protein HscA homolog (622 aa).

The protein belongs to the heat shock protein 70 family.

In terms of biological role, chaperone involved in the maturation of iron-sulfur cluster-containing proteins. Has a low intrinsic ATPase activity which is markedly stimulated by HscB. The protein is Chaperone protein HscA homolog of Verminephrobacter eiseniae (strain EF01-2).